The following is a 788-amino-acid chain: Pre-rRNA-processing protein TSR1 homolog (788 aa).

The disordered stretch occupies residues 1-40 (MSTTGHRAGVFKKPAKPHKSWKGKRTKGEITTENRGREGV). A compositionally biased stretch (basic residues) spans 9-25 (GVFKKPAKPHKSWKGKR). The span at 26-40 (TKGEITTENRGREGV) shows a compositional bias: basic and acidic residues. The 161-residue stretch at 83 to 243 (APCLVTILSL…LRTLNETKKK (161 aa)) folds into the Bms1-type G domain. The segment at 354–433 (LEEADKEMRR…ASEMMFHDEI (80 aa)) is disordered. Acidic residues predominate over residues 378-412 (DDSEDDEDEEDEDEDMDDEEEDKDLEEDDEEEDTP).

Belongs to the TRAFAC class translation factor GTPase superfamily. Bms1-like GTPase family. TSR1 subfamily.

It is found in the nucleus. Its subcellular location is the nucleolus. Required during maturation of the 40S ribosomal subunit in the nucleolus. The polypeptide is Pre-rRNA-processing protein TSR1 homolog (Caenorhabditis briggsae).